We begin with the raw amino-acid sequence, 448 residues long: MGLDQDKIKKRLSQIEIDINQMNQMIDENLQLVEPAEDEAVEDNVKDTGVVDAVKVAETALFSGNDGADSNPGDSAQVEEHKTAQVHIPTENEANKSTDDPSQLSVTQPFIAKEQITHTAIAIGDSYNSFVANSAGNEKAKDSCTENKEDGTVNIDQNRGEADVEIIENNDDEWEDEKSDVEEGRVDKGTEENSEIESFKSPMPQNNTLGGENKLDAELVLDKFSSANKDLDIQPQTIVVGGDNEYNHESSRLADQTPHDDNSENCPNRSGGSTPLDSQTKIFIPKKNSKEDGTNINHFNSDGDGQKKMANFETRRPTNPFRVISVSSNSNSRNGSRKSSLNKYDSPVSSPITSASELGSIAKLEKRHDYLSMKCIKLQKEIDYLNKMNAQGSLSMEDGKRLHRAVVKLQEYLDKKTKEKYEVGVLLSRHLRKQIDRGENGQFWIGTK.

Disordered stretches follow at residues 63 to 103 (SGND…DPSQ), 171 to 211 (DDEW…TLGG), and 242 to 352 (GDNE…SSPI). Residues S70 and S179 each carry the phosphoserine modification. Residues 171-180 (DDEWEDEKSD) are compositionally biased toward acidic residues. Residues 181 to 191 (VEEGRVDKGTE) show a composition bias toward basic and acidic residues. S194 carries the phosphoserine modification. Over residues 245-262 (EYNHESSRLADQTPHDDN) the composition is skewed to basic and acidic residues. T257 carries the phosphothreonine modification. Positions 264–281 (ENCPNRSGGSTPLDSQTK) are enriched in polar residues. A phosphoserine mark is found at S270 and S273. Position 274 is a phosphothreonine (T274). Residues 325–343 (SVSSNSNSRNGSRKSSLNK) are compositionally biased toward low complexity. Phosphoserine occurs at positions 332 and 340. Y344 bears the Phosphotyrosine mark. S346 and S350 each carry phosphoserine.

Component of the GIN4 complex composed of at least BNI5, CDC3, CDC10, CDC11, CDC12, GIN4, NAP1 and SHS1. Interacts directly with CDC11, CDC12 and SHS1.

The protein localises to the cytoplasm. It localises to the bud neck. In terms of biological role, required for normal septin function and cytokinesis. Its recruitment to the bud neck by CDCd11 and SHS1 ensures efficient localization at the bud neck of MYO1, the type II myosin of the actomyosin contractile ring. The chain is Bud neck protein 5 from Saccharomyces cerevisiae (strain ATCC 204508 / S288c) (Baker's yeast).